We begin with the raw amino-acid sequence, 225 residues long: Histone H1 (225 aa).

The disordered stretch occupies residues 1–20 (MGPKATSGTRGRGKKVGTKT). Residues 23–94 (PLPKYKDLIV…GPAGSIKLLK (72 aa)) enclose the H15 domain. Residues 95–147 (KAAQPKPEEAKRAAKPAKRVVKAAKPAKAKPAKAAKAAKPAKPVKAAKAASAV) form a disordered region. Residues 107 to 127 (AAKPAKRVVKAAKPAKAKPAK) are compositionally biased toward basic residues. Positions 128 to 147 (AAKAAKPAKPVKAAKAASAV) are enriched in low complexity.

Belongs to the histone H1/H5 family.

The protein localises to the nucleus. Its subcellular location is the chromosome. In terms of biological role, could act as an H1-type linker histone. The polypeptide is Histone H1 (HHOA) (Eremothecium gossypii (strain ATCC 10895 / CBS 109.51 / FGSC 9923 / NRRL Y-1056) (Yeast)).